The primary structure comprises 330 residues: Inositol 2-dehydrogenase (330 aa).

It belongs to the Gfo/Idh/MocA family.

The enzyme catalyses myo-inositol + NAD(+) = scyllo-inosose + NADH + H(+). The protein operates within polyol metabolism; myo-inositol degradation into acetyl-CoA; acetyl-CoA from myo-inositol: step 1/7. In terms of biological role, involved in the oxidation of myo-inositol (MI) to 2-keto-myo-inositol (2KMI or 2-inosose). The protein is Inositol 2-dehydrogenase (idhA) of Rhizobium meliloti (strain 1021) (Ensifer meliloti).